The following is a 105-amino-acid chain: uncharacterized protein (105 aa).

The next 2 helical transmembrane spans lie at 10–30 and 48–68; these read YVVF…FKIG and YPLA…YPPS.

Its subcellular location is the membrane. This is an uncharacterized protein from Acanthamoeba polyphaga mimivirus (APMV).